We begin with the raw amino-acid sequence, 352 residues long: Ubiquitin thioesterase otulin (352 aa).

The tract at residues 1-48 is disordered; sequence MSRGTMPQPEAWPGASCAETPAREAAATARDGGKAAASGQPRPEMQCP. The segment covering 18–37 has biased composition (low complexity); sequence AETPAREAAATARDGGKAAA. The PIM motif signature appears at 52-57; sequence EEDMYR. Y56 carries the post-translational modification Phosphotyrosine. Linear diubiquitin binding regions lie at residues 95–96 and 124–126; these read EW and RGD. One can recognise an OTU domain in the interval 118–346; sequence TSIRRVRGDN…DRHYNIPVRV (229 aa). Residue D126 is part of the active site. Residue C129 is the Nucleophile of the active site. Linear diubiquitin binding stretches follow at residues 255–259, 283–289, and 336–338; these read FFSVL, TGGLEQV, and DDR. H339 is an active-site residue.

The protein belongs to the peptidase C65 family. Otulin subfamily. As to quaternary structure, interacts (via the PUB domain) with RNF31 (via the PIM motif); the interaction is direct. Interacts with DVL2. Post-translationally, ubiquitinated. Acetylated. In terms of processing, phosphorylated. Phosphorylation at Tyr-56 prevents interaction with RNF31; dephosphorylation promotes interaction with RNF31 and the LUBAC complex.

It localises to the cytoplasm. The enzyme catalyses Thiol-dependent hydrolysis of ester, thioester, amide, peptide and isopeptide bonds formed by the C-terminal Gly of ubiquitin (a 76-residue protein attached to proteins as an intracellular targeting signal).. In terms of biological role, deubiquitinase that specifically removes linear ('Met-1'-linked) polyubiquitin chains to substrates and acts as a regulator of angiogenesis and innate immune response. Required during angiogenesis, craniofacial and neuronal development by regulating the canonical Wnt signaling together with the LUBAC complex. Acts as a negative regulator of NF-kappa-B by regulating the activity of the LUBAC complex. OTULIN function is mainly restricted to homeostasis of the LUBAC complex: acts by removing 'Met-1'-linked autoubiquitination of the LUBAC complex, thereby preventing inactivation of the LUBAC complex. Acts as a key negative regulator of inflammation by restricting spontaneous inflammation and maintaining immune homeostasis. In myeloid cell, required to prevent unwarranted secretion of cytokines leading to inflammation and autoimmunity by restricting linear polyubiquitin formation. Plays a role in innate immune response by restricting linear polyubiquitin formation on LUBAC complex in response to NOD2 stimulation, probably to limit NOD2-dependent pro-inflammatory signaling. The chain is Ubiquitin thioesterase otulin from Homo sapiens (Human).